The following is a 341-amino-acid chain: Phosphoribosylformylglycinamidine cyclo-ligase (341 aa).

This sequence belongs to the AIR synthase family.

The protein resides in the cytoplasm. It carries out the reaction 2-formamido-N(1)-(5-O-phospho-beta-D-ribosyl)acetamidine + ATP = 5-amino-1-(5-phospho-beta-D-ribosyl)imidazole + ADP + phosphate + H(+). It participates in purine metabolism; IMP biosynthesis via de novo pathway; 5-amino-1-(5-phospho-D-ribosyl)imidazole from N(2)-formyl-N(1)-(5-phospho-D-ribosyl)glycinamide: step 2/2. This is Phosphoribosylformylglycinamidine cyclo-ligase from Agathobacter rectalis (strain ATCC 33656 / DSM 3377 / JCM 17463 / KCTC 5835 / VPI 0990) (Eubacterium rectale).